Reading from the N-terminus, the 211-residue chain is MNVFARSSVLAAEMIDVFDRTHTEKELVFQSKELCRDFIHSRITREGLSWSKVELDLPEPRGVLVDVSVVLLKLGDELECMRPYVYRNIAKQLNISVSVEAVVSDAFLSVATEVIAMGITWGKVVAIYAVAAGLAVDCVRLGHPVMVHTIVDSLGEFVRRSLVPWLKKRGGWVDILKCVVNMDSRAHVHWLSTAVLTWREFIKTMYVYLTK.

A BH4 motif is present at residues 32-44 (KELCRDFIHSRIT). Residues 67–83 (VSVVLLKLGDELECMRP) carry the BH3 motif. A BH1 motif is present at residues 113–132 (EVIAMGITWGKVVAIYAVAA). Residues 165–179 (WLKKRGGWVDILKCV) carry the BH2 motif. The chain crosses the membrane as a helical span at residues 190–210 (WLSTAVLTWREFIKTMYVYLT).

This sequence belongs to the Bcl-2 family. In terms of tissue distribution, expressed strongly in ovary and more weakly in eye. Little expression in other tissues examined.

The protein localises to the membrane. May play a role in apoptosis. Does not appear to show pro-apoptotic activity when expressed ectopically in early embryos. This is Bcl-2-related ovarian killer protein homolog B (bokb) from Danio rerio (Zebrafish).